The chain runs to 179 residues: Pyridoxal 5'-phosphate synthase subunit PdxT (179 aa).

Gly-48–Ser-50 lines the L-glutamine pocket. Catalysis depends on Cys-79, which acts as the Nucleophile. L-glutamine is bound by residues Arg-101 and Ile-127–Arg-128. Residues His-163 and Glu-165 each act as charge relay system in the active site.

The protein belongs to the glutaminase PdxT/SNO family. In terms of assembly, in the presence of PdxS, forms a dodecamer of heterodimers. Only shows activity in the heterodimer.

The catalysed reaction is aldehydo-D-ribose 5-phosphate + D-glyceraldehyde 3-phosphate + L-glutamine = pyridoxal 5'-phosphate + L-glutamate + phosphate + 3 H2O + H(+). The enzyme catalyses L-glutamine + H2O = L-glutamate + NH4(+). It functions in the pathway cofactor biosynthesis; pyridoxal 5'-phosphate biosynthesis. In terms of biological role, catalyzes the hydrolysis of glutamine to glutamate and ammonia as part of the biosynthesis of pyridoxal 5'-phosphate. The resulting ammonia molecule is channeled to the active site of PdxS. This chain is Pyridoxal 5'-phosphate synthase subunit PdxT, found in Francisella tularensis subsp. tularensis (strain FSC 198).